The primary structure comprises 129 residues: uncharacterized protein (129 aa).

The disordered stretch occupies residues 52-94; the sequence is NGDEESQDDWLNDLLKSDGDGGKAGPVDPSHPMETTTTDHSSQ. Over residues 53–62 the composition is skewed to acidic residues; sequence GDEESQDDWL. Over residues 84–94 the composition is skewed to polar residues; the sequence is METTTTDHSSQ.

This is an uncharacterized protein from Caenorhabditis elegans.